Here is a 264-residue protein sequence, read N- to C-terminus: Teichoic acids export ATP-binding protein TagH (264 aa).

The 220-residue stretch at 24 to 243 (IKDALIPKNK…YEQFLKDFKK (220 aa)) folds into the ABC transporter domain. 57–64 (GINGSGKS) provides a ligand contact to ATP.

Belongs to the ABC transporter superfamily. Teichoic acids exporter (TC 3.A.1.104.1) family. The complex is composed of two ATP-binding proteins (TagH) and two transmembrane proteins (TagG).

It is found in the cell membrane. The catalysed reaction is ATP + H2O + teichoic acidSide 1 = ADP + phosphate + teichoic acidSide 2.. Its function is as follows. Part of the ABC transporter complex TagGH involved in teichoic acids export. Responsible for energy coupling to the transport system. In Staphylococcus haemolyticus (strain JCSC1435), this protein is Teichoic acids export ATP-binding protein TagH.